A 160-amino-acid chain; its full sequence is Large ribosomal subunit protein bL19 (160 aa).

Belongs to the bacterial ribosomal protein bL19 family.

Functionally, this protein is located at the 30S-50S ribosomal subunit interface and may play a role in the structure and function of the aminoacyl-tRNA binding site. In Prochlorococcus marinus subsp. pastoris (strain CCMP1986 / NIES-2087 / MED4), this protein is Large ribosomal subunit protein bL19.